Reading from the N-terminus, the 102-residue chain is Small ribosomal subunit protein uS10 (102 aa).

Belongs to the universal ribosomal protein uS10 family. In terms of assembly, part of the 30S ribosomal subunit.

In terms of biological role, involved in the binding of tRNA to the ribosomes. This chain is Small ribosomal subunit protein uS10, found in Leifsonia xyli subsp. xyli (strain CTCB07).